A 393-amino-acid chain; its full sequence is MKRPVTGKDLMIVNMGPHHPSMHGVLRLIVTLDGEDVVDCEPILGYLHRGMEKIAENRAIIQYLPYVTRWDYLATMFTEAITVNGPEQLGNIQIPKRASYIRVIMLELSRIASHLLWLGPFMADIGAQTPFFYIFREREFVYDLFEAATGMRMMHNFFRIGGIAADLPYGWIDKCLDFCDYFLTEVVEYQKLITRNPIFLERVEGVGIIDGEEAINWGLSGPMLRASGIPWDLRKVDRYESYDEFEWEIQWQKQGDSLARYLVRLSEMTESIKIIQQALEGLPGGPYENLESRGFDRKRNPEWNDFEYRFISKKPSPTFELSKQELYVRVEAPKGELGIFLIGDQSGFPWRWKIRPPGFINLQILPELVKRMKLADIMTILGSIDIIMGEVDR.

The protein belongs to the complex I 49 kDa subunit family. In terms of assembly, NDH is composed of at least 16 different subunits, 5 of which are encoded in the nucleus.

The protein localises to the plastid. Its subcellular location is the chloroplast thylakoid membrane. It catalyses the reaction a plastoquinone + NADH + (n+1) H(+)(in) = a plastoquinol + NAD(+) + n H(+)(out). The enzyme catalyses a plastoquinone + NADPH + (n+1) H(+)(in) = a plastoquinol + NADP(+) + n H(+)(out). Functionally, NDH shuttles electrons from NAD(P)H:plastoquinone, via FMN and iron-sulfur (Fe-S) centers, to quinones in the photosynthetic chain and possibly in a chloroplast respiratory chain. The immediate electron acceptor for the enzyme in this species is believed to be plastoquinone. Couples the redox reaction to proton translocation, and thus conserves the redox energy in a proton gradient. The sequence is that of NAD(P)H-quinone oxidoreductase subunit H, chloroplastic from Draba nemorosa (Woodland whitlowgrass).